A 185-amino-acid chain; its full sequence is Probable nicotinate-nucleotide adenylyltransferase (185 aa).

The protein belongs to the NadD family.

The enzyme catalyses nicotinate beta-D-ribonucleotide + ATP + H(+) = deamido-NAD(+) + diphosphate. The protein operates within cofactor biosynthesis; NAD(+) biosynthesis; deamido-NAD(+) from nicotinate D-ribonucleotide: step 1/1. Functionally, catalyzes the reversible adenylation of nicotinate mononucleotide (NaMN) to nicotinic acid adenine dinucleotide (NaAD). This chain is Probable nicotinate-nucleotide adenylyltransferase, found in Methylorubrum extorquens (strain CM4 / NCIMB 13688) (Methylobacterium extorquens).